The sequence spans 238 residues: Gem-associated protein 8 (238 aa).

The tract at residues 66–127 (AGHPWDSQGQ…LESDSDDEVE (62 aa)) is disordered. 2 stretches are compositionally biased toward polar residues: residues 72-82 (SQGQHMAQQES) and 96-108 (LRNS…STRG). Positions 113 to 127 (CEEEELESDSDDEVE) are enriched in acidic residues. S122 is subject to Phosphoserine. The stretch at 131-164 (SNMEITEELRQYFAQTERHREERRRQQQLDAERL) forms a coiled coil.

In terms of assembly, part of the core SMN complex that contains SMN1, GEMIN2/SIP1, DDX20/GEMIN3, GEMIN4, GEMIN5, GEMIN6, GEMIN7, GEMIN8 and STRAP/UNRIP. Part of the SMN-Sm complex that contains SMN1, GEMIN2/SIP1, DDX20/GEMIN3, GEMIN4, GEMIN5, GEMIN6, GEMIN7, GEMIN8, STRAP/UNRIP and the Sm proteins SNRPB, SNRPD1, SNRPD2, SNRPD3, SNRPE, SNRPF and SNRPG. Interacts with GEMIN6; the interaction is direct. Interacts with GEMIN7; the interaction is direct. Interacts with SMN1; the interaction is direct. Interacts with GEMIN4; the interaction is direct. Widely expressed in embryonic tissues (at protein level).

It is found in the nucleus. It localises to the gem. The protein localises to the cytoplasm. The SMN complex catalyzes the assembly of small nuclear ribonucleoproteins (snRNPs), the building blocks of the spliceosome, and thereby plays an important role in the splicing of cellular pre-mRNAs. Most spliceosomal snRNPs contain a common set of Sm proteins SNRPB, SNRPD1, SNRPD2, SNRPD3, SNRPE, SNRPF and SNRPG that assemble in a heptameric protein ring on the Sm site of the small nuclear RNA to form the core snRNP (Sm core). In the cytosol, the Sm proteins SNRPD1, SNRPD2, SNRPE, SNRPF and SNRPG are trapped in an inactive 6S pICln-Sm complex by the chaperone CLNS1A that controls the assembly of the core snRNP. To assemble core snRNPs, the SMN complex accepts the trapped 5Sm proteins from CLNS1A forming an intermediate. Binding of snRNA inside 5Sm triggers eviction of the SMN complex, thereby allowing binding of SNRPD3 and SNRPB to complete assembly of the core snRNP. This chain is Gem-associated protein 8 (Gemin8), found in Mus musculus (Mouse).